Reading from the N-terminus, the 393-residue chain is O-phospho-L-seryl-tRNA:Cys-tRNA synthase 1 (393 aa).

Residues 85–86, Asn-190, and 213–215 each bind pyridoxal 5'-phosphate; these read AR and SGH. At Lys-216 the chain carries N6-(pyridoxal phosphate)lysine.

It belongs to the SepCysS family. Homodimer. Interacts with SepRS. The cofactor is pyridoxal 5'-phosphate.

It catalyses the reaction O-phospho-L-seryl-tRNA(Cys) + hydrogen sulfide + H(+) = L-cysteinyl-tRNA(Cys) + phosphate. Its function is as follows. Converts O-phospho-L-seryl-tRNA(Cys) (Sep-tRNA(Cys)) to L-cysteinyl-tRNA(Cys) (Cys-tRNA(Cys)). The protein is O-phospho-L-seryl-tRNA:Cys-tRNA synthase 1 of Methanospirillum hungatei JF-1 (strain ATCC 27890 / DSM 864 / NBRC 100397 / JF-1).